We begin with the raw amino-acid sequence, 544 residues long: Chaperonin GroEL 2 (544 aa).

ATP is bound by residues 29–32 (TLGP), 86–90 (DGTTT), G413, 479–481 (NAA), and D495.

The protein belongs to the chaperonin (HSP60) family. Forms a cylinder of 14 subunits composed of two heptameric rings stacked back-to-back. Interacts with the co-chaperonin GroES.

It localises to the cytoplasm. The enzyme catalyses ATP + H2O + a folded polypeptide = ADP + phosphate + an unfolded polypeptide.. Together with its co-chaperonin GroES, plays an essential role in assisting protein folding. The GroEL-GroES system forms a nano-cage that allows encapsulation of the non-native substrate proteins and provides a physical environment optimized to promote and accelerate protein folding. This chain is Chaperonin GroEL 2, found in Prochlorococcus marinus (strain MIT 9313).